The chain runs to 478 residues: PTS system mannitol-specific EIICB component (478 aa).

The Cytoplasmic segment spans residues 1 to 29 (MQQQEQQQGGMKVKVQRFGSYLSGMIMPN). Residues 18-347 (FGSYLSGMIM…VILKSSKASE (330 aa)) form the PTS EIIC type-2 domain. The chain crosses the membrane as a helical span at residues 30–51 (IGAFIAWGIITALFIPAGWFPN). Topologically, residues 52 to 55 (EQLN) are extracellular. Residues 56–76 (TLVSPMITYLLPLLIAYTGGK) form a helical membrane-spanning segment. Over 77–139 (MIYDHRGGVV…QGFEMLINNF (63 aa)) the chain is Cytoplasmic. Residues 140–161 (TAGIVGAALTILAFYAIGPVVL) form a helical membrane-spanning segment. Residues 162-170 (TLNKLLAAG) are Extracellular-facing. Residues 171–191 (VEVIVHANLLPVASVFVEPAK) traverse the membrane as a helical segment. Residues 192-278 (VLFLNNAINH…ILMKPALILA (87 aa)) lie on the Cytoplasmic side of the membrane. Residues 279-298 (AIAGGASGLLTFTIFNAGLV) traverse the membrane as a helical segment. At 299 to 318 (AAASPGSIIALMAMTPRGGY) the chain is on the extracellular side. The helical transmembrane segment at 319–340 (FGVLAGVLVAAAVSFIVSAVIL) threads the bilayer. Over 341–478 (KSSKASEEDL…YDELIEKLKK (138 aa)) the chain is Cytoplasmic. A PTS EIIB type-2 domain is found at 390–478 (NKIIFACDAG…YDELIEKLKK (89 aa)). Residue C396 is the Phosphocysteine intermediate; for EIIB activity of the active site. C396 bears the Phosphocysteine; by EIIA mark.

Homodimer.

The protein resides in the cell membrane. It catalyses the reaction D-mannitol(out) + N(pros)-phospho-L-histidyl-[protein] = D-mannitol 1-phosphate(in) + L-histidyl-[protein]. In terms of biological role, the phosphoenolpyruvate-dependent sugar phosphotransferase system (sugar PTS), a major carbohydrate active transport system, catalyzes the phosphorylation of incoming sugar substrates concomitantly with their translocation across the cell membrane. The enzyme II CmtAB PTS system is involved in D-mannitol transport. In Bacillus subtilis (strain 168), this protein is PTS system mannitol-specific EIICB component.